Reading from the N-terminus, the 572-residue chain is Dihydroxy-acid dehydratase (572 aa).

C57 lines the [2Fe-2S] cluster pocket. Residue D89 participates in Mg(2+) binding. C130 serves as a coordination point for [2Fe-2S] cluster. Mg(2+) contacts are provided by D131 and K132. K132 carries the post-translational modification N6-carboxylysine. [2Fe-2S] cluster is bound at residue C202. Residue E453 participates in Mg(2+) binding. Catalysis depends on S479, which acts as the Proton acceptor.

The protein belongs to the IlvD/Edd family. Homodimer. The cofactor is [2Fe-2S] cluster. Requires Mg(2+) as cofactor.

It catalyses the reaction (2R)-2,3-dihydroxy-3-methylbutanoate = 3-methyl-2-oxobutanoate + H2O. The enzyme catalyses (2R,3R)-2,3-dihydroxy-3-methylpentanoate = (S)-3-methyl-2-oxopentanoate + H2O. Its pathway is amino-acid biosynthesis; L-isoleucine biosynthesis; L-isoleucine from 2-oxobutanoate: step 3/4. It participates in amino-acid biosynthesis; L-valine biosynthesis; L-valine from pyruvate: step 3/4. Its function is as follows. Functions in the biosynthesis of branched-chain amino acids. Catalyzes the dehydration of (2R,3R)-2,3-dihydroxy-3-methylpentanoate (2,3-dihydroxy-3-methylvalerate) into 2-oxo-3-methylpentanoate (2-oxo-3-methylvalerate) and of (2R)-2,3-dihydroxy-3-methylbutanoate (2,3-dihydroxyisovalerate) into 2-oxo-3-methylbutanoate (2-oxoisovalerate), the penultimate precursor to L-isoleucine and L-valine, respectively. The polypeptide is Dihydroxy-acid dehydratase (Streptococcus sanguinis (strain SK36)).